A 128-amino-acid chain; its full sequence is Ribosome-binding factor A (128 aa).

Belongs to the RbfA family. In terms of assembly, monomer. Binds 30S ribosomal subunits, but not 50S ribosomal subunits or 70S ribosomes.

The protein resides in the cytoplasm. In terms of biological role, one of several proteins that assist in the late maturation steps of the functional core of the 30S ribosomal subunit. Associates with free 30S ribosomal subunits (but not with 30S subunits that are part of 70S ribosomes or polysomes). Required for efficient processing of 16S rRNA. May interact with the 5'-terminal helix region of 16S rRNA. This chain is Ribosome-binding factor A, found in Rickettsia prowazekii (strain Madrid E).